The following is a 486-amino-acid chain: Zinc finger chaperone ZPR1 (486 aa).

The tract at residues Met1 to Asn31 is disordered. The residue at position 23 (Ser23) is a Phosphoserine. 2 consecutive C4-type zinc fingers follow at residues Cys54–Cys86 and Cys295–Cys327. Thr407 is subject to Phosphothreonine.

It belongs to the ZPR1 family. Interacts with elongation factor 1-alpha.

The protein resides in the cytoplasm. It localises to the nucleus. Acts as a protein folding chaperone for elongation factor 1-alpha. This Saccharomyces cerevisiae (strain ATCC 204508 / S288c) (Baker's yeast) protein is Zinc finger chaperone ZPR1.